The following is a 122-amino-acid chain: Large ribosomal subunit protein eL22B (122 aa).

It belongs to the eukaryotic ribosomal protein eL22 family. In terms of assembly, component of the large ribosomal subunit (LSU). Mature yeast ribosomes consist of a small (40S) and a large (60S) subunit. The 40S small subunit contains 1 molecule of ribosomal RNA (18S rRNA) and 33 different proteins (encoded by 57 genes). The large 60S subunit contains 3 rRNA molecules (25S, 5.8S and 5S rRNA) and 46 different proteins (encoded by 81 genes).

Its subcellular location is the cytoplasm. In terms of biological role, component of the ribosome, a large ribonucleoprotein complex responsible for the synthesis of proteins in the cell. The small ribosomal subunit (SSU) binds messenger RNAs (mRNAs) and translates the encoded message by selecting cognate aminoacyl-transfer RNA (tRNA) molecules. The large subunit (LSU) contains the ribosomal catalytic site termed the peptidyl transferase center (PTC), which catalyzes the formation of peptide bonds, thereby polymerizing the amino acids delivered by tRNAs into a polypeptide chain. The nascent polypeptides leave the ribosome through a tunnel in the LSU and interact with protein factors that function in enzymatic processing, targeting, and the membrane insertion of nascent chains at the exit of the ribosomal tunnel. In Saccharomyces cerevisiae (strain ATCC 204508 / S288c) (Baker's yeast), this protein is Large ribosomal subunit protein eL22B.